The sequence spans 259 residues: Proteasome subunit alpha (259 aa).

The disordered stretch occupies residues 226 to 259 (LAEGSATSATSATPGEAEAPATAPEGDVDTGSNG). A compositionally biased stretch (low complexity) spans 227–250 (AEGSATSATSATPGEAEAPATAPE).

Belongs to the peptidase T1A family. As to quaternary structure, the 20S proteasome core is composed of 14 alpha and 14 beta subunits that assemble into four stacked heptameric rings, resulting in a barrel-shaped structure. The two inner rings, each composed of seven catalytic beta subunits, are sandwiched by two outer rings, each composed of seven alpha subunits. The catalytic chamber with the active sites is on the inside of the barrel. Has a gated structure, the ends of the cylinder being occluded by the N-termini of the alpha-subunits. Is capped by the proteasome-associated ATPase, ARC.

The protein resides in the cytoplasm. Its pathway is protein degradation; proteasomal Pup-dependent pathway. Its activity is regulated as follows. The formation of the proteasomal ATPase ARC-20S proteasome complex, likely via the docking of the C-termini of ARC into the intersubunit pockets in the alpha-rings, may trigger opening of the gate for substrate entry. Interconversion between the open-gate and close-gate conformations leads to a dynamic regulation of the 20S proteasome proteolysis activity. Functionally, component of the proteasome core, a large protease complex with broad specificity involved in protein degradation. The chain is Proteasome subunit alpha from Streptosporangium roseum (strain ATCC 12428 / DSM 43021 / JCM 3005 / KCTC 9067 / NCIMB 10171 / NRRL 2505 / NI 9100).